The following is a 341-amino-acid chain: Elongation factor G (341 aa).

The protein belongs to the GTP-binding elongation factor family. EF-G/EF-2 subfamily.

The protein resides in the cytoplasm. Catalyzes the GTP-dependent ribosomal translocation step during translation elongation. During this step, the ribosome changes from the pre-translocational (PRE) to the post-translocational (POST) state as the newly formed A-site-bound peptidyl-tRNA and P-site-bound deacylated tRNA move to the P and E sites, respectively. Catalyzes the coordinated movement of the two tRNA molecules, the mRNA and conformational changes in the ribosome. In Streptomyces ramocissimus, this protein is Elongation factor G (fus).